A 951-amino-acid chain; its full sequence is Zinc fingers and homeoboxes protein 3 (951 aa).

The interval 1-66 (MASKRKSTTP…SSTDGSALAN (66 aa)) is disordered. The required for nuclear localization stretch occupies residues 1–107 (MASKRKSTTP…SEHTDFNKDP (107 aa)). The segment covering 42–58 (PSEAPDASSEAAPNPSS) has biased composition (low complexity). C2H2-type zinc fingers lie at residues 77–100 (YCCK…NSEH) and 109–132 (FVCT…AKCH). The segment at 227–252 (TFINGAAPGSQASAKSTKPPPAANGP) is disordered. Residues 238-483 (ASAKSTKPPP…LLTACPSITS (246 aa)) are required for homodimerization and interaction with NFYA. Residues 299–497 (LSSIPTYNAA…DANIYKNKKS (199 aa)) form a required for repressor activity region. DNA-binding regions (homeobox) lie at residues 300–359 (SSIP…GISW) and 489–548 (ANIY…RNLK). The tract at residues 492–550 (YKNKKSHEQLSALKGSFCRNQFPGQSEVEHLTKVTGLSTREVRKWFSDRRYHCRNLKGS) is required for nuclear localization. Ser-599 carries the post-translational modification Phosphoserine. Residues 607–666 (TPTKYKERAPEQLRVLENSFAQNPLPPEEELDRLRSETKMTRREIDGWFSERRKKVNTEE) constitute a DNA-binding region (homeobox 3). The span at 662-676 (VNTEETKKADGHMPK) shows a compositional bias: basic and acidic residues. The segment at 662 to 690 (VNTEETKKADGHMPKEEEEGAEQEGRDEE) is disordered. The span at 677 to 690 (EEEEGAEQEGRDEE) shows a compositional bias: acidic residues. Phosphoserine is present on residues Ser-703 and Ser-718. DNA-binding regions (homeobox) lie at residues 759-818 (PSKV…KNGQ) and 830-889 (FPPG…TRAV). The segment at 916-951 (SELSENSESWEPSAPEASSEPFDTSSPQSGRQLEAD) is disordered. The segment covering 919–936 (SENSESWEPSAPEASSEP) has biased composition (low complexity). Phosphoserine is present on residues Ser-922 and Ser-941. Over residues 937–951 (FDTSSPQSGRQLEAD) the composition is skewed to polar residues.

Belongs to the ZHX family. As to quaternary structure, homodimer (via homeobox domain 1). Heterodimer with ZHX1 (via homeobox domain 1). Heterodimer with ZHX2 (via homeobox domain 1). Heterodimerization with ZHX1 is a prerequisite for repressor activity. Interacts with NFYA. As to expression, ubiquitously expressed.

The protein localises to the nucleus. In terms of biological role, acts as a transcriptional repressor. Involved in the early stages of mesenchymal stem cell (MSC) osteogenic differentiation. Is a regulator of podocyte gene expression during primary glomerula disease. Binds to promoter DNA. In Mus musculus (Mouse), this protein is Zinc fingers and homeoboxes protein 3 (Zhx3).